The chain runs to 153 residues: Aspartate carbamoyltransferase regulatory chain (153 aa).

Cysteine 109, cysteine 114, cysteine 138, and cysteine 141 together coordinate Zn(2+).

This sequence belongs to the PyrI family. Contains catalytic and regulatory chains. Zn(2+) serves as cofactor.

Involved in allosteric regulation of aspartate carbamoyltransferase. This chain is Aspartate carbamoyltransferase regulatory chain, found in Salmonella schwarzengrund (strain CVM19633).